A 98-amino-acid chain; its full sequence is NADH-ubiquinone oxidoreductase chain 4L (98 aa).

Transmembrane regions (helical) follow at residues 2–22 (LSIS…MLMF), 29–49 (SLLC…LIIL), and 61–81 (ILLL…LVMV).

It belongs to the complex I subunit 4L family. As to quaternary structure, core subunit of respiratory chain NADH dehydrogenase (Complex I) which is composed of 45 different subunits.

Its subcellular location is the mitochondrion inner membrane. It carries out the reaction a ubiquinone + NADH + 5 H(+)(in) = a ubiquinol + NAD(+) + 4 H(+)(out). Functionally, core subunit of the mitochondrial membrane respiratory chain NADH dehydrogenase (Complex I) which catalyzes electron transfer from NADH through the respiratory chain, using ubiquinone as an electron acceptor. Part of the enzyme membrane arm which is embedded in the lipid bilayer and involved in proton translocation. The polypeptide is NADH-ubiquinone oxidoreductase chain 4L (MT-ND4L) (Microcebus ravelobensis (Golden-brown mouse lemur)).